The primary structure comprises 223 residues: Deoxyribose-phosphate aldolase (223 aa).

Aspartate 91 functions as the Proton donor/acceptor in the catalytic mechanism. Catalysis depends on lysine 153, which acts as the Schiff-base intermediate with acetaldehyde. Lysine 182 functions as the Proton donor/acceptor in the catalytic mechanism.

This sequence belongs to the DeoC/FbaB aldolase family. DeoC type 1 subfamily.

It is found in the cytoplasm. The enzyme catalyses 2-deoxy-D-ribose 5-phosphate = D-glyceraldehyde 3-phosphate + acetaldehyde. The protein operates within carbohydrate degradation; 2-deoxy-D-ribose 1-phosphate degradation; D-glyceraldehyde 3-phosphate and acetaldehyde from 2-deoxy-alpha-D-ribose 1-phosphate: step 2/2. Its function is as follows. Catalyzes a reversible aldol reaction between acetaldehyde and D-glyceraldehyde 3-phosphate to generate 2-deoxy-D-ribose 5-phosphate. This Streptococcus pyogenes serotype M2 (strain MGAS10270) protein is Deoxyribose-phosphate aldolase.